The following is a 440-amino-acid chain: Chromosomal replication initiator protein DnaA (440 aa).

Positions 1-74 (MNPSQILENL…VQSGNKAIIN (74 aa)) are domain I, interacts with DnaA modulators. The tract at residues 74-99 (NIQAQSAKQSNKSTKIDIAHIKAQST) is domain II. Positions 100 to 316 (ILNPSFTFDS…GIIISLNAYA (217 aa)) are domain III, AAA+ region. The ATP site is built by Gly-146, Gly-148, Lys-149, and Thr-150. Positions 317–440 (TILGQEITLE…KNKILVKSQS (124 aa)) are domain IV, binds dsDNA.

This sequence belongs to the DnaA family. As to quaternary structure, oligomerizes as a right-handed, spiral filament on DNA at oriC.

The protein resides in the cytoplasm. Functionally, plays an essential role in the initiation and regulation of chromosomal replication. ATP-DnaA binds to the origin of replication (oriC) to initiate formation of the DNA replication initiation complex once per cell cycle. Binds the DnaA box (a 9 base pair repeat at the origin) and separates the double-stranded (ds)DNA. Forms a right-handed helical filament on oriC DNA; dsDNA binds to the exterior of the filament while single-stranded (ss)DNA is stabiized in the filament's interior. The ATP-DnaA-oriC complex binds and stabilizes one strand of the AT-rich DNA unwinding element (DUE), permitting loading of DNA polymerase. After initiation quickly degrades to an ADP-DnaA complex that is not apt for DNA replication. Binds acidic phospholipids. This is Chromosomal replication initiator protein DnaA from Campylobacter jejuni (strain RM1221).